Reading from the N-terminus, the 191-residue chain is Lipid A acyltransferase PagP (191 aa).

Residues 1-23 form the signal peptide; sequence MRLFYQRISLLISLCGFFSAAWA. Catalysis depends on residues His62, Asp105, and Ser106.

Belongs to the lipid A palmitoyltransferase family. Homodimer.

The protein localises to the cell outer membrane. The catalysed reaction is a lipid A + a 1,2-diacyl-sn-glycero-3-phosphocholine = a hepta-acyl lipid A + a 2-acyl-sn-glycero-3-phosphocholine. It catalyses the reaction a lipid IVA + a 1,2-diacyl-sn-glycero-3-phosphocholine = a lipid IVB + a 2-acyl-sn-glycero-3-phosphocholine. It carries out the reaction a lipid IIA + a 1,2-diacyl-sn-glycero-3-phosphocholine = a lipid IIB + a 2-acyl-sn-glycero-3-phosphocholine. Its function is as follows. Transfers a fatty acid residue from the sn-1 position of a phospholipid to the N-linked hydroxyfatty acid chain on the proximal unit of lipid A or its precursors. This is Lipid A acyltransferase PagP from Sodalis glossinidius (strain morsitans).